Here is a 101-residue protein sequence, read N- to C-terminus: Large ribosomal subunit protein uL23 (101 aa).

This sequence belongs to the universal ribosomal protein uL23 family. As to quaternary structure, part of the 50S ribosomal subunit. Contacts protein L29, and trigger factor when it is bound to the ribosome.

Functionally, one of the early assembly proteins it binds 23S rRNA. One of the proteins that surrounds the polypeptide exit tunnel on the outside of the ribosome. Forms the main docking site for trigger factor binding to the ribosome. The polypeptide is Large ribosomal subunit protein uL23 (Thiobacillus denitrificans (strain ATCC 25259 / T1)).